The following is a 494-amino-acid chain: Maintenance of mitochondrial morphology protein 1 (494 aa).

The Lumenal segment spans residues 1–22; sequence MSSQPGDPATLPAQSSLSFTQG. A helical membrane pass occupies residues 23 to 43; sequence FLLGQLSVVLVLAAFIKFFIF. Residues 44–494 are Cytoplasmic-facing; the sequence is GEAPPPPSRG…GSLPEAVTPG (451 aa). Disordered stretches follow at residues 50 to 98, 274 to 330, 398 to 426, and 449 to 494; these read PSRG…SSST, PPLD…KSNV, VRTGDDAETASNGPRSTVSADIGGSARHE, and VASR…VTPG. Over residues 54 to 64 the composition is skewed to basic residues; sequence LSHRSATHRRS. Composition is skewed to polar residues over residues 65 to 76 and 85 to 98; these read NSIYSNSPQEAG and STSNVLRPVPSSST. Residues 130 to 387 form the SMP-LTD domain; sequence QPESLDWFNV…EPRVQVVGLP (258 aa). Over residues 274 to 286 the composition is skewed to pro residues; it reads PPLDTPSHSPSPP. Composition is skewed to polar residues over residues 406–416 and 466–477; these read TASNGPRSTVS and RSMTRQESSGDL.

The protein belongs to the MMM1 family. In terms of assembly, homodimer. Component of the ER-mitochondria encounter structure (ERMES) or MDM complex, composed of mmm1, mdm10, mdm12 and mdm34. A mmm1 homodimer associates with one molecule of mdm12 on each side in a pairwise head-to-tail manner, and the SMP-LTD domains of mmm1 and mdm12 generate a continuous hydrophobic tunnel for phospholipid trafficking.

The protein localises to the endoplasmic reticulum membrane. Its function is as follows. Component of the ERMES/MDM complex, which serves as a molecular tether to connect the endoplasmic reticulum (ER) and mitochondria. Components of this complex are involved in the control of mitochondrial shape and protein biogenesis, and function in nonvesicular lipid trafficking between the ER and mitochondria. The mdm12-mmm1 subcomplex functions in the major beta-barrel assembly pathway that is responsible for biogenesis of all outer membrane beta-barrel proteins, and acts in a late step after the SAM complex. The mdm10-mdm12-mmm1 subcomplex further acts in the TOM40-specific pathway after the action of the mdm12-mmm1 complex. Essential for establishing and maintaining the structure of mitochondria and maintenance of mtDNA nucleoids. The polypeptide is Maintenance of mitochondrial morphology protein 1 (Aspergillus clavatus (strain ATCC 1007 / CBS 513.65 / DSM 816 / NCTC 3887 / NRRL 1 / QM 1276 / 107)).